Consider the following 281-residue polypeptide: Pantothenate synthetase (281 aa).

30–37 (MGNLHQGH) is a binding site for ATP. Residue His-37 is the Proton donor of the active site. Residue Gln-61 participates in (R)-pantoate binding. Residue Gln-61 participates in beta-alanine binding. 149–152 (GNKD) serves as a coordination point for ATP. Gln-155 serves as a coordination point for (R)-pantoate. ATP-binding positions include Ile-178 and 186–189 (MSSR).

It belongs to the pantothenate synthetase family. Homodimer.

It is found in the cytoplasm. It carries out the reaction (R)-pantoate + beta-alanine + ATP = (R)-pantothenate + AMP + diphosphate + H(+). It participates in cofactor biosynthesis; (R)-pantothenate biosynthesis; (R)-pantothenate from (R)-pantoate and beta-alanine: step 1/1. Functionally, catalyzes the condensation of pantoate with beta-alanine in an ATP-dependent reaction via a pantoyl-adenylate intermediate. The sequence is that of Pantothenate synthetase from Shewanella baltica (strain OS185).